The sequence spans 102 residues: S-phase delaying protein 2 (102 aa).

Residues 43–62 (FPSYHKDQTDRNELPQQKHD) are disordered. Over residues 46 to 62 (YHKDQTDRNELPQQKHD) the composition is skewed to basic and acidic residues.

Belongs to the DIF1/spd1 family.

It localises to the cytoplasm. It is found in the nucleus. Regulates the ribonucleotide reductase activity. This Schizosaccharomyces pombe (strain 972 / ATCC 24843) (Fission yeast) protein is S-phase delaying protein 2 (spd2).